We begin with the raw amino-acid sequence, 211 residues long: Protein-L-isoaspartate O-methyltransferase (211 aa).

The active site involves S62.

Belongs to the methyltransferase superfamily. L-isoaspartyl/D-aspartyl protein methyltransferase family.

It is found in the cytoplasm. It carries out the reaction [protein]-L-isoaspartate + S-adenosyl-L-methionine = [protein]-L-isoaspartate alpha-methyl ester + S-adenosyl-L-homocysteine. In terms of biological role, catalyzes the methyl esterification of L-isoaspartyl residues in peptides and proteins that result from spontaneous decomposition of normal L-aspartyl and L-asparaginyl residues. It plays a role in the repair and/or degradation of damaged proteins. This Shewanella frigidimarina (strain NCIMB 400) protein is Protein-L-isoaspartate O-methyltransferase.